The following is a 374-amino-acid chain: MSDNAHNLLYDKFELPEAVKMLPVEGLPIDKHARFIAEPLERGMGHTLGNALRRALLIGLEAPAIISFAMTGVLHEYMAIEGVIEDVTNIILNLKGALLKKYPMQDSSLGRTTQVLKASISIDASDLAAANGQKEVTLQDLLQEGDFEAVNPDQVIFTVTQPIQLEVVLRIAFGRGYTPSERIVLEDKGVYEIVLDAAFSPVTLVNYFVEDTRVGQDTDFDRLVLIVETDGRVTPKEALAFSTQILTKHFSIFENMDEKKIVFEEAISIEKENKDDILHKLILGINEIELSVRSTNCLSNANIETIGELVIMPEPRLLQFRNFGKKSLCEIKNKLKEMKLELGMDLTQFGVGLDNVKEKMKWYAEKIRAKNIKG.

The interval 1 to 257 (MSDNAHNLLY…KHFSIFENMD (257 aa)) is alpha N-terminal domain (alpha-NTD). Residues 274-374 (KDDILHKLIL…EKIRAKNIKG (101 aa)) are alpha C-terminal domain (alpha-CTD).

The protein belongs to the RNA polymerase alpha chain family. Homodimer. The RNAP catalytic core consists of 2 alpha, 1 beta, 1 beta' and 1 omega subunit. When a sigma factor is associated with the core the holoenzyme is formed, which can initiate transcription.

It carries out the reaction RNA(n) + a ribonucleoside 5'-triphosphate = RNA(n+1) + diphosphate. Functionally, DNA-dependent RNA polymerase catalyzes the transcription of DNA into RNA using the four ribonucleoside triphosphates as substrates. The sequence is that of DNA-directed RNA polymerase subunit alpha from Chlamydia pneumoniae (Chlamydophila pneumoniae).